A 263-amino-acid polypeptide reads, in one-letter code: Probable septum site-determining protein MinC (263 aa).

The tract at residues 107-159 (LPPSGARERPLDIKDSAPRKPAEEPSPSAGEARPEPAKAEEKPAEPVSRPTKV) is disordered. Composition is skewed to basic and acidic residues over residues 112–129 (ARER…KPAE) and 138–150 (ARPE…EKPA).

This sequence belongs to the MinC family. Interacts with MinD and FtsZ.

Cell division inhibitor that blocks the formation of polar Z ring septums. Rapidly oscillates between the poles of the cell to destabilize FtsZ filaments that have formed before they mature into polar Z rings. Prevents FtsZ polymerization. The polypeptide is Probable septum site-determining protein MinC (Pseudomonas aeruginosa (strain LESB58)).